The sequence spans 366 residues: tRNA-queuosine alpha-mannosyltransferase (366 aa).

It belongs to the glycosyltransferase group 1 family. Glycosyltransferase 4 subfamily.

Its subcellular location is the cytoplasm. It is found in the nucleus. It catalyses the reaction queuosine(34) in tRNA(Asp) + GDP-alpha-D-mannose = O-4''-alpha-D-mannosylqueuosine(34) in tRNA(Asp) + GDP + H(+). In terms of biological role, glycosyltransferase that specifically catalyzes mannosylation of cytoplasmic tRNA(Asp) modified with queuosine at position 34 (queuosine(34)). Mannosylates the cyclopentene moiety of queuosine(34) in tRNA(Asp) to form mannosyl-queuosine(34). Mannosylation of queuosine(34) in tRNA(Asp) is required to slow-down elongation at cognate codons, GAC and GAU, thereby regulating protein translation. This chain is tRNA-queuosine alpha-mannosyltransferase (GTDC1), found in Bos taurus (Bovine).